Reading from the N-terminus, the 310-residue chain is DNA repair nuclease APEX1 (310 aa).

Residues 1 to 51 form a disordered region; it reads MPKRAKKNEEGVDGEADNGTAAAKKEKKGKEPEAPILYEDPPEKLTSKDGR. Residues 41 to 51 are compositionally biased toward basic and acidic residues; it reads PPEKLTSKDGR. Residues D63 and E89 each coordinate Mg(2+). Residue Y164 is part of the active site. Residues D203, N205, and D300 each coordinate Mg(2+). Residue D203 is the Proton donor/acceptor of the active site.

This sequence belongs to the DNA repair enzymes AP/ExoA family. Mg(2+) serves as cofactor. Mn(2+) is required as a cofactor.

The protein resides in the nucleus. The protein localises to the nucleolus. It is found in the nucleus speckle. It localises to the endoplasmic reticulum. Its subcellular location is the cytoplasm. The protein resides in the mitochondrion. It catalyses the reaction Exonucleolytic cleavage in the 3'- to 5'-direction to yield nucleoside 5'-phosphates.. Its function is as follows. Functions as an apurinic/apyrimidinic (AP) endodeoxyribonuclease in the DNA base excision repair (BER) pathway of DNA lesions induced by oxidative and alkylating agents. Initiates repair of AP sites in DNA by catalyzing hydrolytic incision of the phosphodiester backbone immediately adjacent to the damage, generating a single-strand break with 5'-deoxyribose phosphate and 3'-hydroxyl ends. Has 3'-5' exoribonuclease activity on mismatched deoxyribonucleotides at the 3' termini of nicked or gapped DNA molecules during short-patch BER. May also play a role in the epigenetic regulation of gene expression by participating in DNA demethylation. Required for passage through the mid-blastula transition MBT. May also act as an endoribonuclease involved in the control of single-stranded RNA metabolism. Has no redox activity. Binds DNA and RNA. This is DNA repair nuclease APEX1 (apex1) from Danio rerio (Zebrafish).